The sequence spans 311 residues: HPr kinase/phosphorylase (311 aa).

Active-site residues include H139 and K160. An ATP-binding site is contributed by 154-161 (GASGVGKS). Residue S161 participates in Mg(2+) binding. The active-site Proton acceptor; for phosphorylation activity. Proton donor; for dephosphorylation activity is D178. The interval 202–211 (LEIRGIGIID) is important for the catalytic mechanism of both phosphorylation and dephosphorylation. E203 contributes to the Mg(2+) binding site. R244 is a catalytic residue. The tract at residues 265–270 (PVRPGR) is important for the catalytic mechanism of dephosphorylation.

Belongs to the HPrK/P family. As to quaternary structure, homohexamer. Mg(2+) serves as cofactor.

The catalysed reaction is [HPr protein]-L-serine + ATP = [HPr protein]-O-phospho-L-serine + ADP + H(+). It carries out the reaction [HPr protein]-O-phospho-L-serine + phosphate + H(+) = [HPr protein]-L-serine + diphosphate. Its function is as follows. Catalyzes the ATP- as well as the pyrophosphate-dependent phosphorylation of a specific serine residue in HPr, a phosphocarrier protein of the phosphoenolpyruvate-dependent sugar phosphotransferase system (PTS). HprK/P also catalyzes the pyrophosphate-producing, inorganic phosphate-dependent dephosphorylation (phosphorolysis) of seryl-phosphorylated HPr (P-Ser-HPr). The two antagonistic activities of HprK/P are regulated by several intracellular metabolites, which change their concentration in response to the absence or presence of rapidly metabolisable carbon sources (glucose, fructose, etc.) in the growth medium. Therefore, by controlling the phosphorylation state of HPr, HPrK/P is a sensor enzyme that plays a major role in the regulation of carbon metabolism and sugar transport: it mediates carbon catabolite repression (CCR), and regulates PTS-catalyzed carbohydrate uptake and inducer exclusion. This chain is HPr kinase/phosphorylase, found in Exiguobacterium sibiricum (strain DSM 17290 / CCUG 55495 / CIP 109462 / JCM 13490 / 255-15).